A 302-amino-acid chain; its full sequence is Nucleotide-binding protein RHOS4_02640 (302 aa).

15-22 contributes to the ATP binding site; sequence GPSGAGRT. A GTP-binding site is contributed by 62–65; the sequence is DVRN.

The protein belongs to the RapZ-like family.

In terms of biological role, displays ATPase and GTPase activities. The protein is Nucleotide-binding protein RHOS4_02640 of Cereibacter sphaeroides (strain ATCC 17023 / DSM 158 / JCM 6121 / CCUG 31486 / LMG 2827 / NBRC 12203 / NCIMB 8253 / ATH 2.4.1.) (Rhodobacter sphaeroides).